The following is a 458-amino-acid chain: SLIT-ROBO Rho GTPase-activating protein 2B (458 aa).

The F-BAR domain occupies 22–324 (KEIRAQLTEQ…AVENLDATSD (303 aa)). Positions 181–203 (LKEAEKQEEKQIGKSVKQEDRQT) are enriched in basic and acidic residues. A disordered region spans residues 181-214 (LKEAEKQEEKQIGKSVKQEDRQTPRSPDSTANVR). The stretch at 362–400 (QSELLQRCQQLQSRLSTLKIENEEVKKTMEATLQTIQDI) forms a coiled coil.

May interact with SRGAP2; formation of the heterodimer alters SRGAP2 function.

Its function is as follows. May regulate cell migration and differentiation through interaction with and inhibition of SRGAP2. In contrast to SRGAP2C, it is not able to induce long-lasting changes in synaptic density throughout adulthood. In Homo sapiens (Human), this protein is SLIT-ROBO Rho GTPase-activating protein 2B (SRGAP2B).